The sequence spans 379 residues: Isocitrate dehydrogenase [NAD] subunit 2, mitochondrial (379 aa).

Residues 1 to 27 constitute a mitochondrion transit peptide; the sequence is MSMLSTLRTAGSLRTFSRSACYSFQRF. 4 residues coordinate substrate: arginine 129, arginine 139, arginine 160, and aspartate 247. Positions 247, 273, and 277 each coordinate Mg(2+).

This sequence belongs to the isocitrate and isopropylmalate dehydrogenases family. In terms of assembly, octamer of two non-identical subunits IDH1 and IDH2. Mg(2+) is required as a cofactor. The cofactor is Mn(2+).

The protein localises to the mitochondrion. The enzyme catalyses D-threo-isocitrate + NAD(+) = 2-oxoglutarate + CO2 + NADH. Its function is as follows. Performs an essential role in the oxidative function of the citric acid cycle and is involved in glutamate biosynthesis. Also binds RNA; specifically to the 5'-untranslated leaders of mitochondrial mRNAs. The sequence is that of Isocitrate dehydrogenase [NAD] subunit 2, mitochondrial (idh2) from Schizosaccharomyces pombe (strain 972 / ATCC 24843) (Fission yeast).